Consider the following 529-residue polypeptide: Bifunctional purine biosynthesis protein PurH (529 aa).

The region spanning 1 to 148 (MQQRRPIRRA…KNHKDVAIVV (148 aa)) is the MGS-like domain.

It belongs to the PurH family.

The catalysed reaction is (6R)-10-formyltetrahydrofolate + 5-amino-1-(5-phospho-beta-D-ribosyl)imidazole-4-carboxamide = 5-formamido-1-(5-phospho-D-ribosyl)imidazole-4-carboxamide + (6S)-5,6,7,8-tetrahydrofolate. It carries out the reaction IMP + H2O = 5-formamido-1-(5-phospho-D-ribosyl)imidazole-4-carboxamide. Its pathway is purine metabolism; IMP biosynthesis via de novo pathway; 5-formamido-1-(5-phospho-D-ribosyl)imidazole-4-carboxamide from 5-amino-1-(5-phospho-D-ribosyl)imidazole-4-carboxamide (10-formyl THF route): step 1/1. It functions in the pathway purine metabolism; IMP biosynthesis via de novo pathway; IMP from 5-formamido-1-(5-phospho-D-ribosyl)imidazole-4-carboxamide: step 1/1. The protein is Bifunctional purine biosynthesis protein PurH of Yersinia enterocolitica serotype O:8 / biotype 1B (strain NCTC 13174 / 8081).